The primary structure comprises 191 residues: MRRGRLIVVSGPSGAGKSTLIRAALDAVPQLAYSVSATTRAPRPGEVNGRDYIFLSREEFERWIREGRFLEWAEYSGNLYGTPAHRVEEYLESGLSVILEIELQGARKVRRKRPDAVMIFVRAPSLEETRRRLEGRATESEDAVQRRLATAVEEVAARDEFDCEVVNDDYERAREEMIEIMRRIVAGGDPC.

Residues 4 to 182 form the Guanylate kinase-like domain; that stretch reads GRLIVVSGPS…AREEMIEIMR (179 aa). 11–18 contacts ATP; the sequence is GPSGAGKS.

Belongs to the guanylate kinase family.

It is found in the cytoplasm. It carries out the reaction GMP + ATP = GDP + ADP. Functionally, essential for recycling GMP and indirectly, cGMP. This Rubrobacter xylanophilus (strain DSM 9941 / JCM 11954 / NBRC 16129 / PRD-1) protein is Guanylate kinase.